We begin with the raw amino-acid sequence, 293 residues long: MFTGVATALATPFQENGQLNLEAWAALIEDQIKEGVTGLVIGGTTGEGMTITDDEFETLLVRAVEVANGRAVIIAGTGSNNTAVSIEKTKRAAELGAEMAMVVTPYYNKSTQAGLIAHFTAIADASPIPLMLYNVPSRTGVALAPETVGELAEHPRITALKEASGDISVMAQMMAHIPEGFTVYCGNDDQILPYMAWGAQGVVSVLSNVYPGATVALAEALLAGDLQTARTWQIRLLPVIDELFAEVNPIPVKAALQARGFEVGAPRLPLVPMSATAEAKLLSAMEQFNEVRQ.

Residue Thr-45 coordinates pyruvate. Tyr-133 functions as the Proton donor/acceptor in the catalytic mechanism. Lys-161 acts as the Schiff-base intermediate with substrate in catalysis. Position 203 (Val-203) interacts with pyruvate.

Belongs to the DapA family. As to quaternary structure, homotetramer; dimer of dimers.

The protein resides in the cytoplasm. The enzyme catalyses L-aspartate 4-semialdehyde + pyruvate = (2S,4S)-4-hydroxy-2,3,4,5-tetrahydrodipicolinate + H2O + H(+). It functions in the pathway amino-acid biosynthesis; L-lysine biosynthesis via DAP pathway; (S)-tetrahydrodipicolinate from L-aspartate: step 3/4. In terms of biological role, catalyzes the condensation of (S)-aspartate-beta-semialdehyde [(S)-ASA] and pyruvate to 4-hydroxy-tetrahydrodipicolinate (HTPA). The sequence is that of 4-hydroxy-tetrahydrodipicolinate synthase from Exiguobacterium sp. (strain ATCC BAA-1283 / AT1b).